The chain runs to 208 residues: Protein TIC 20-II, chloroplastic (208 aa).

Residues 1 to 49 constitute a chloroplast transit peptide; sequence MASLCLSLHQTLTNPLSAPRCRPLSLSFPGSSTFSIRPSSRRATALTTR. Transmembrane regions (helical) follow at residues 61 to 83, 101 to 121, 134 to 154, and 172 to 192; these read VISIASYALPFFNSLQYGRFLFA, LYRSVPYASFVAFFGLYLGVV, AMQAVTLDVLLAVPVLLTRIL, and TGVFVFSFMCFVYGVVSSLLG.

This sequence belongs to the Tic20 family. As to quaternary structure, part of the Tic complex. As to expression, expressed in leaves, siliques and roots.

It localises to the plastid. It is found in the chloroplast inner membrane. Functionally, may be involved in protein precursor import into chloroplasts. Not redundant with TIC20-I, TIC20-IV or TIC20-V. The polypeptide is Protein TIC 20-II, chloroplastic (TIC20-II) (Arabidopsis thaliana (Mouse-ear cress)).